A 316-amino-acid chain; its full sequence is Ribosomal RNA small subunit methyltransferase H (316 aa).

Residues 35–37 (GGH), D55, F79, D101, and Q108 contribute to the S-adenosyl-L-methionine site.

Belongs to the methyltransferase superfamily. RsmH family.

It is found in the cytoplasm. It carries out the reaction cytidine(1402) in 16S rRNA + S-adenosyl-L-methionine = N(4)-methylcytidine(1402) in 16S rRNA + S-adenosyl-L-homocysteine + H(+). Functionally, specifically methylates the N4 position of cytidine in position 1402 (C1402) of 16S rRNA. The protein is Ribosomal RNA small subunit methyltransferase H of Aliivibrio fischeri (strain MJ11) (Vibrio fischeri).